A 252-amino-acid polypeptide reads, in one-letter code: Hydroxyacylglutathione hydrolase (252 aa).

Zn(2+)-binding residues include His-54, His-56, Asp-58, His-59, His-111, Asp-128, and His-166.

The protein belongs to the metallo-beta-lactamase superfamily. Glyoxalase II family. As to quaternary structure, monomer. Zn(2+) is required as a cofactor.

It catalyses the reaction an S-(2-hydroxyacyl)glutathione + H2O = a 2-hydroxy carboxylate + glutathione + H(+). Its pathway is secondary metabolite metabolism; methylglyoxal degradation; (R)-lactate from methylglyoxal: step 2/2. In terms of biological role, thiolesterase that catalyzes the hydrolysis of S-D-lactoyl-glutathione to form glutathione and D-lactic acid. The protein is Hydroxyacylglutathione hydrolase of Aliivibrio fischeri (strain MJ11) (Vibrio fischeri).